Consider the following 225-residue polypeptide: tRNA (guanine-N(1)-)-methyltransferase (225 aa).

S-adenosyl-L-methionine is bound by residues glycine 112 and 132-137 (IGDYVL).

This sequence belongs to the RNA methyltransferase TrmD family. As to quaternary structure, homodimer.

The protein resides in the cytoplasm. The catalysed reaction is guanosine(37) in tRNA + S-adenosyl-L-methionine = N(1)-methylguanosine(37) in tRNA + S-adenosyl-L-homocysteine + H(+). In terms of biological role, specifically methylates guanosine-37 in various tRNAs. The polypeptide is tRNA (guanine-N(1)-)-methyltransferase (Flavobacterium psychrophilum (strain ATCC 49511 / DSM 21280 / CIP 103535 / JIP02/86)).